The chain runs to 369 residues: Mannose-1-phosphate guanylyltransferase catalytic subunit beta (369 aa).

The tract at residues 12–231 (RALILVGGYG…TGFWMDIGQP (220 aa)) is substrate-binding domain. Aspartate 120 is a GDP-alpha-D-mannose binding site. Residue aspartate 120 participates in Mg(2+) binding. Lysine 171 is an active-site residue. A GDP-alpha-D-mannose-binding site is contributed by aspartate 227. Residue aspartate 227 participates in Mg(2+) binding. The interval 254–369 (YTGPGVVGNV…ASVPEPQIIM (116 aa)) is hexapeptide repeat domain.

This sequence belongs to the transferase hexapeptide repeat family. In terms of assembly, component of the GMPPA-GMPPB mannose-1-phosphate guanylyltransferase complex composed of 4 Gmppa subunits and 8 Gmppb subunits; the complex is organized into three layers, a central layer made up of 2 Gmppa dimers sandwiched between two layers each made up of 2 Gmppb dimers. Gmppb catalytic activity is reduced when part of the complex and binding of GDP-alpha-D-Mannose by Gmppa induces allosteric feedback inhibition of Gmppb. It depends on Mg(2+) as a cofactor.

The catalysed reaction is alpha-D-mannose 1-phosphate + GTP + H(+) = GDP-alpha-D-mannose + diphosphate. It functions in the pathway nucleotide-sugar biosynthesis; GDP-alpha-D-mannose biosynthesis; GDP-alpha-D-mannose from alpha-D-mannose 1-phosphate (GTP route): step 1/1. Its activity is regulated as follows. Enzyme activity is reduced by incorporation into the GMPPA-GMPPB mannose-1-phosphate guanylyltransferase complex. Allosterically inhibited, when part of the GMPPA-GMPPB complex, by GDP-alpha-D-mannose binding to Gmppa. Its function is as follows. Catalytic subunit of the GMPPA-GMPPB mannose-1-phosphate guanylyltransferase complex. Catalyzes the formation of GDP-mannose, an essential precursor of glycan moieties of glycoproteins and glycolipids. Can catalyze the reverse reaction in vitro. Together with GMPPA regulates GDP-alpha-D-mannose levels. This chain is Mannose-1-phosphate guanylyltransferase catalytic subunit beta, found in Drosophila melanogaster (Fruit fly).